Here is a 382-residue protein sequence, read N- to C-terminus: Galactokinase (382 aa).

34 to 37 (EHTD) is a substrate binding site. Residue 124–130 (GAGLSSS) participates in ATP binding. Mg(2+) is bound by residues Ser130 and Glu162. Asp174 functions as the Proton acceptor in the catalytic mechanism. Tyr223 contributes to the substrate binding site.

This sequence belongs to the GHMP kinase family. GalK subfamily.

It localises to the cytoplasm. It catalyses the reaction alpha-D-galactose + ATP = alpha-D-galactose 1-phosphate + ADP + H(+). The protein operates within carbohydrate metabolism; galactose metabolism. Its function is as follows. Catalyzes the transfer of the gamma-phosphate of ATP to D-galactose to form alpha-D-galactose-1-phosphate (Gal-1-P). This Salmonella gallinarum (strain 287/91 / NCTC 13346) protein is Galactokinase.